The primary structure comprises 225 residues: Cardiotrophin-like cytokine factor 1 (225 aa).

Positions 1-27 (MDLRAGDSWGMLACLCTVLWHLPAVPA) are cleaved as a signal peptide. Asn-29 carries N-linked (GlcNAc...) asparagine glycosylation.

The protein belongs to the IL-6 superfamily. As to quaternary structure, forms a heteromeric complex with cardiotrophin-like cytokine CRLF1/CLF-1; the CRLF1-CLCF1 complex is a ligand for the ciliary neurotrophic factor receptor/CNTFR. The CRLF1-CLCF1 heterodimer binds SORL1 (via N-terminal ectodomain); within this complex, the interaction is mediated predominantly by the CRLF1 moiety. The tripartite signaling complex formed by CRLF1, CLCF1 and CNTFR also binds SORL1.

It localises to the secreted. In terms of biological role, in complex with CRLF1, forms a heterodimeric neurotropic cytokine that plays a crucial role during neuronal development. Also stimulates B-cells. Binds to and activates the ILST/gp130 receptor. This Mus musculus (Mouse) protein is Cardiotrophin-like cytokine factor 1 (Clcf1).